The following is a 190-amino-acid chain: Potassium-transporting ATPase KdpC subunit (190 aa).

The chain crosses the membrane as a helical span at residues 10 to 30 (TFIFLLLITGGVYPLLTTVLG).

Belongs to the KdpC family. The system is composed of three essential subunits: KdpA, KdpB and KdpC.

The protein localises to the cell inner membrane. Its function is as follows. Part of the high-affinity ATP-driven potassium transport (or Kdp) system, which catalyzes the hydrolysis of ATP coupled with the electrogenic transport of potassium into the cytoplasm. This subunit acts as a catalytic chaperone that increases the ATP-binding affinity of the ATP-hydrolyzing subunit KdpB by the formation of a transient KdpB/KdpC/ATP ternary complex. In Shigella dysenteriae serotype 1 (strain Sd197), this protein is Potassium-transporting ATPase KdpC subunit.